A 230-amino-acid polypeptide reads, in one-letter code: 7-cyano-7-deazaguanine synthase (230 aa).

14 to 24 (LSGGLDSTTTL) contacts ATP. Zn(2+)-binding residues include cysteine 194, cysteine 204, cysteine 207, and cysteine 210.

It belongs to the QueC family. Zn(2+) is required as a cofactor.

It catalyses the reaction 7-carboxy-7-deazaguanine + NH4(+) + ATP = 7-cyano-7-deazaguanine + ADP + phosphate + H2O + H(+). The protein operates within purine metabolism; 7-cyano-7-deazaguanine biosynthesis. Functionally, catalyzes the ATP-dependent conversion of 7-carboxy-7-deazaguanine (CDG) to 7-cyano-7-deazaguanine (preQ(0)). This is 7-cyano-7-deazaguanine synthase from Vesicomyosocius okutanii subsp. Calyptogena okutanii (strain HA).